A 475-amino-acid polypeptide reads, in one-letter code: LEC14B homolog (475 aa).

The segment at 1-34 (MSYRTRFGKDNSACDSGNAVEGSGSSKGPNEVSN) is disordered. Positions 23–33 (SGSSKGPNEVS) are enriched in polar residues. WD repeat units follow at residues 211 to 240 (DEFGIFSVRFSTDGRELVAASRDASIYVYD), 252 to 283 (AHSSDVNTVCFADETGHLIYSGSDDNLCKVWD), 299 to 329 (GHLEGVTFIDSRGDGRYFISNGKDQTTQLWD), 375 to 411 (GHGVLRTLIRCYLSPAYSTGQKYIYTGSSDHCVYIYD), and 423 to 453 (HHEGPVRDCSWHPLYPMLVSSSWDGTIARWE).

Belongs to the WD repeat LEC14B family.

The chain is LEC14B homolog from Prunus armeniaca (Apricot).